Here is a 161-residue protein sequence, read N- to C-terminus: MNPRRKKRLTLAVALIAGVAAVASLLLYALNSNLNLFYTPYEITHGKNDTGVMPEVGQRIRVGGMVTIGSMKRDPDSLHVEFAVHDSAGGTVFVTYDDLLPDLFREGQGIVAQGVLVESGKLEATEVLAKHDENYMPPEVAEAMGQTHEKPTYNQKALEDK.

Over 1–8 (MNPRRKKR) the chain is Cytoplasmic. A helical; Signal-anchor for type II membrane protein transmembrane segment spans residues 9 to 29 (LTLAVALIAGVAAVASLLLYA). Residues 30 to 161 (LNSNLNLFYT…TYNQKALEDK (132 aa)) are Periplasmic-facing. Heme contacts are provided by H131 and Y135. A disordered region spans residues 142–161 (EAMGQTHEKPTYNQKALEDK). Positions 147 to 161 (THEKPTYNQKALEDK) are enriched in basic and acidic residues.

It belongs to the CcmE/CycJ family.

Its subcellular location is the cell inner membrane. Its function is as follows. Heme chaperone required for the biogenesis of c-type cytochromes. Transiently binds heme delivered by CcmC and transfers the heme to apo-cytochromes in a process facilitated by CcmF and CcmH. This chain is Cytochrome c-type biogenesis protein CcmE, found in Shewanella frigidimarina (strain NCIMB 400).